A 723-amino-acid chain; its full sequence is Methionine--tRNA ligase (723 aa).

The short motif at 12–22 (PYANGDIHLGH) is the 'HIGH' region element. Positions 143, 146, 156, and 159 each coordinate Zn(2+). Positions 345–349 (KMSKS) match the 'KMSKS' region motif. Lys-348 lines the ATP pocket. Residues 568–604 (PAAATAPAKDAKPAKEAGSQQRHAEKQQHAAGVSETA) are disordered. The 112-residue stretch at 612 to 723 (DFTKVDLRIA…EGAQAGMRVK (112 aa)) folds into the tRNA-binding domain.

The protein belongs to the class-I aminoacyl-tRNA synthetase family. MetG type 1 subfamily. Homodimer. It depends on Zn(2+) as a cofactor.

Its subcellular location is the cytoplasm. It carries out the reaction tRNA(Met) + L-methionine + ATP = L-methionyl-tRNA(Met) + AMP + diphosphate. In terms of biological role, is required not only for elongation of protein synthesis but also for the initiation of all mRNA translation through initiator tRNA(fMet) aminoacylation. The protein is Methionine--tRNA ligase of Azoarcus sp. (strain BH72).